Reading from the N-terminus, the 190-residue chain is dTTP/UTP pyrophosphatase (190 aa).

Asp-71 serves as the catalytic Proton acceptor.

This sequence belongs to the Maf family. YhdE subfamily. Requires a divalent metal cation as cofactor.

It localises to the cytoplasm. It carries out the reaction dTTP + H2O = dTMP + diphosphate + H(+). It catalyses the reaction UTP + H2O = UMP + diphosphate + H(+). Nucleoside triphosphate pyrophosphatase that hydrolyzes dTTP and UTP. May have a dual role in cell division arrest and in preventing the incorporation of modified nucleotides into cellular nucleic acids. The polypeptide is dTTP/UTP pyrophosphatase (Xanthomonas campestris pv. campestris (strain ATCC 33913 / DSM 3586 / NCPPB 528 / LMG 568 / P 25)).